A 385-amino-acid chain; its full sequence is Eukaryotic translation initiation factor 3 subunit M (385 aa).

Positions Asn-180–His-342 constitute a PCI domain.

The protein belongs to the eIF-3 subunit M family. Component of the eukaryotic translation initiation factor 3 (eIF-3) complex.

It is found in the cytoplasm. Component of the eukaryotic translation initiation factor 3 (eIF-3) complex, which is involved in protein synthesis of a specialized repertoire of mRNAs and, together with other initiation factors, stimulates binding of mRNA and methionyl-tRNAi to the 40S ribosome. The eIF-3 complex specifically targets and initiates translation of a subset of mRNAs involved in cell proliferation. The protein is Eukaryotic translation initiation factor 3 subunit M of Anopheles gambiae (African malaria mosquito).